The following is a 372-amino-acid chain: Protein phosphatase Mn(2+)-dependent 1K (372 aa).

The transit peptide at 1 to 29 (MSTAALITLVRSGGNQVRRRVLLSSRLLQ) directs the protein to the mitochondrion. The tract at residues 34–55 (VTPTCHSSTSEPRCSRFDPDGS) is disordered. A critical for association with the BCKDH complex region spans residues 46 to 61 (RCSRFDPDGSGSPATW). One can recognise a PPM-type phosphatase domain in the interval 94-346 (NVGCASQIGK…DNSTAVVVPF (253 aa)). Residues aspartate 127 and glycine 128 each coordinate Mn(2+). Serine 248 carries the post-translational modification Phosphoserine. Residues aspartate 298 and aspartate 337 each contribute to the Mn(2+) site.

Belongs to the PP2C family. As to quaternary structure, monomer. Interacts with E1 and E2 components of the branched-chain alpha-ketoacid dehydrogenase (BCKDH) complex; this interaction requires colocalization in mitochondria. Interacts with BCKDHA but not with BCKDHB of the E1 component. Interacts with the 24-meric E2 core composed of DBT monomers with a 24:1 stoichiometry; the N-terminal region (residues 49-61) of PPM1K and C-terminal linker of the lipoyl domain of DBT (residues 145-160) are critical for this interaction, whereas the lipoyl prosthetic group is dispensable. Competes with BCKDK for binding to the E2 core; this interaction is modulated by branched-chain alpha-keto acids. At steady state, BCKDH holoenzyme preferentially binds BCKDK and BCKDHA is phosphorylated. In response to high levels of branched-chain alpha-keto acids, the inhibitory BCKDK is replaced by activating PPM1K leading to BCKDHA dephosphorylation and BCAA degradation. Requires Mn(2+) as cofactor.

It localises to the mitochondrion matrix. It catalyses the reaction O-phospho-L-seryl-[3-methyl-2-oxobutanoate dehydrogenase] + H2O = L-seryl-[3-methyl-2-oxobutanoate dehydrogenase] + phosphate. The catalysed reaction is O-phospho-L-seryl-[protein] + H2O = L-seryl-[protein] + phosphate. It functions in the pathway protein modification. Up-regulated upon interaction with the 24-meric DBT/E2 core of the BCKDH complex. Inhibited by Mg(2+) and Ca(2+) ions likely by competing with Mn(2+) ions for binding to the same metal-binding sites. Its function is as follows. Serine/threonine-protein phosphatase component of macronutrients metabolism. Forms a functional kinase and phosphatase pair with BCKDK, serving as a metabolic regulatory node that coordinates branched-chain amino acids (BCAAs) with glucose and lipid metabolism via two distinct phosphoprotein targets: mitochondrial BCKDHA subunit of the branched-chain alpha-ketoacid dehydrogenase (BCKDH) complex and cytosolic ACLY, a lipogenic enzyme of Krebs cycle. At high levels of branched-chain ketoacids, dephosphorylates and activates mitochondrial BCKDH complex, a multisubunit complex consisting of three multimeric components each involved in different steps of BCAA catabolism: E1 composed of BCKDHA and BCKDHB, E2 core composed of DBT monomers, and E3 composed of DLD monomers. Tightly associates with the E2 component of BCKDH complex and dephosphorylates BCKDHA on Ser-337. Regulates the reversible phosphorylation of ACLY in response to changes in cellular carbohydrate abundance such as occurs during fasting to feeding metabolic transition. At fasting state, appears to dephosphorylate ACLY on Ser-455 and inactivate it. Refeeding stimulates MLXIPL/ChREBP transcription factor, leading to increased BCKDK to PPM1K expression ratio, phosphorylation and activation of ACLY that ultimately results in the generation of malonyl-CoA and oxaloacetate immediate substrates of de novo lipogenesis and gluconeogenesis, respectively. Recognizes phosphosites having SxS or RxxS motifs and strictly depends on Mn(2+) ions for the phosphatase activity. Regulates Ca(2+)-induced opening of mitochondrial transition pore and apoptotic cell death. This chain is Protein phosphatase Mn(2+)-dependent 1K, found in Homo sapiens (Human).